The chain runs to 561 residues: Solute carrier family 41 member 2 (561 aa).

Over methionine 1–glutamine 150 the chain is Extracellular. A helical membrane pass occupies residues isoleucine 151–isoleucine 171. The Cytoplasmic segment spans residues valine 172–glutamate 183. Residues valine 184 to serine 204 form a helical membrane-spanning segment. Over arginine 205–glutamine 233 the chain is Extracellular. Residues valine 234 to proline 254 traverse the membrane as a helical segment. At aspartate 255–serine 270 the chain is on the cytoplasmic side. The helical transmembrane segment at valine 271–glycine 291 threads the bilayer. Residues serine 292–asparagine 301 are Extracellular-facing. Residues valine 302 to isoleucine 322 traverse the membrane as a helical segment. The Cytoplasmic portion of the chain corresponds to serine 323–tyrosine 333. The helical transmembrane segment at alanine 334–isoleucine 354 threads the bilayer. At alanine 355–valine 364 the chain is on the extracellular side. Residues leucine 365–isoleucine 385 traverse the membrane as a helical segment. The Cytoplasmic portion of the chain corresponds to leucine 386–asparagine 394. Residues leucine 395–isoleucine 415 form a helical membrane-spanning segment. Residues glutamine 416–alanine 457 lie on the Extracellular side of the membrane. The chain crosses the membrane as a helical span at residues glutamine 458 to methionine 478. At lysine 479 to proline 487 the chain is on the cytoplasmic side. A helical membrane pass occupies residues isoleucine 488–alanine 508. Residues aspartate 509–threonine 531 are Extracellular-facing. A helical transmembrane segment spans residues alanine 532–isoleucine 552. Residues glycine 553–aspartate 561 lie on the Cytoplasmic side of the membrane.

It belongs to the SLC41A transporter family.

The protein resides in the cell membrane. The enzyme catalyses Mg(2+)(in) = Mg(2+)(out). It carries out the reaction Mn(2+)(in) = Mn(2+)(out). The catalysed reaction is Co(2+)(in) = Co(2+)(out). It catalyses the reaction Ni(2+)(in) = Ni(2+)(out). The enzyme catalyses Fe(2+)(in) = Fe(2+)(out). Its function is as follows. Acts as a plasma-membrane magnesium transporter. Can also mediate the transport of other divalent metal cations in an order of Ba(2+) &gt; Ni(2+) &gt; Co(2+) &gt; Fe(2+) &gt; Mn(2+). The polypeptide is Solute carrier family 41 member 2 (slc41a2) (Xenopus laevis (African clawed frog)).